The primary structure comprises 317 residues: Serpentine receptor class delta-47 (317 aa).

7 consecutive transmembrane segments (helical) span residues Ile8 to Val28, Val42 to Leu62, Cys89 to Ile109, Ile128 to Val148, Tyr185 to Thr205, Ala239 to Thr259, and Ile270 to Ala290.

It belongs to the nematode receptor-like protein srd family.

Its subcellular location is the membrane. The polypeptide is Serpentine receptor class delta-47 (srd-47) (Caenorhabditis elegans).